The sequence spans 195 residues: Flavin prenyltransferase UbiX (195 aa).

FMN contacts are provided by residues 17-19 (GGS), serine 43, 94-97 (SAGT), and arginine 129. 2 residues coordinate dimethylallyl phosphate: tyrosine 159 and arginine 175.

It belongs to the UbiX/PAD1 family.

It catalyses the reaction dimethylallyl phosphate + FMNH2 = prenylated FMNH2 + phosphate. Functionally, flavin prenyltransferase that catalyzes the synthesis of the prenylated FMN cofactor (prenyl-FMN) for 4-hydroxy-3-polyprenylbenzoic acid decarboxylase UbiD. The prenyltransferase is metal-independent and links a dimethylallyl moiety from dimethylallyl monophosphate (DMAP) to the flavin N5 and C6 atoms of FMN. The protein is Flavin prenyltransferase UbiX of Deinococcus radiodurans (strain ATCC 13939 / DSM 20539 / JCM 16871 / CCUG 27074 / LMG 4051 / NBRC 15346 / NCIMB 9279 / VKM B-1422 / R1).